Here is a 253-residue protein sequence, read N- to C-terminus: MSKSDVFHLGLTKNDLQGAQLAIVPGDPERVEKIAALMDKPVKLASHREFTSWRAELDGKAVIVCSTGIGGPSTSIAVEELAQLGIRTFLRIGTTGAIQPHINVGDVLVTTASVRLDGASLHFAPMEFPAVADFACTTALVEAAKSIGATTHVGVTASSDTFYPGQERYDTYSGRVVRRFKGSMEEWQAMGVMNYEMESATLLTMCASQGLRAGMVAGVIVNRTQQEIPNAETMKQTESHAVKIVVEAARRLL.

The protein belongs to the PNP/UDP phosphorylase family. Homohexamer.

Its subcellular location is the cytoplasm. It catalyses the reaction uridine + phosphate = alpha-D-ribose 1-phosphate + uracil. It participates in pyrimidine metabolism; UMP biosynthesis via salvage pathway; uracil from uridine (phosphorylase route): step 1/1. Catalyzes the reversible phosphorylytic cleavage of uridine to uracil and ribose-1-phosphate. This chain is Uridine phosphorylase (udp), found in Salmonella typhi.